A 1088-amino-acid polypeptide reads, in one-letter code: Ran-binding protein 17 (1088 aa).

Ala-2 bears the N-acetylalanine mark. Ser-569 bears the Phosphoserine mark.

The protein belongs to the exportin family. Binds to nucleoporins and the GTP-bound form of Ran. As to expression, highly expressed in primary spermatocytes and very weakly in pancreas.

It localises to the cytoplasm. It is found in the nucleus. Its subcellular location is the nuclear pore complex. Its function is as follows. May function as a nuclear transport receptor. In Mus musculus (Mouse), this protein is Ran-binding protein 17 (Ranbp17).